The sequence spans 233 residues: Chaperone protein MrkB (233 aa).

The first 18 residues, M1 to A18, serve as a signal peptide directing secretion.

The protein belongs to the periplasmic pilus chaperone family.

It is found in the periplasm. Mediates assembly of pili by forming soluble multimeric complexes with pili subunits as an intermediate step in the assembly process. This protein is involved in type 3 pili assembly. The protein is Chaperone protein MrkB (mrkB) of Klebsiella pneumoniae.